Consider the following 205-residue polypeptide: Meiotic nuclear division protein 1 homolog (205 aa).

A coiled-coil region spans residues 79–147 (LHARKRKLET…CADLEKYKEC (69 aa)).

It belongs to the MND1 family.

It localises to the nucleus. Required for proper homologous chromosome pairing and efficient cross-over and intragenic recombination during meiosis. Stimulates both dmc1- and rad51-mediated homologous strand assimilation, which is required for the resolution of meiotic double-strand breaks. This is Meiotic nuclear division protein 1 homolog from Xenopus laevis (African clawed frog).